Reading from the N-terminus, the 551-residue chain is MESLLRQLSICNELIAQGPACPVGNIAWLNEFCATFLDFASELKAHLPEIAPRWGAPEGGNNIEVETIFLCLTQVVTCITQLERTINIESKFGHETTPMTRLHFLDRIDWCVRRIYVSLSQLDLHQESGAADNLEDHTFVELMDLALDHLEAFMEGLGNTTSNFLYIEEENDTNDACQLGSIINHIVRHALAFANVALEADKKALSELCETLLSECTTFLEGSAELNPGHRKLEALSLERALYGLETFLNEALLHSIFASLVELENTPINRLRHALQEQESESGLTEKLVSDFDTNMDRIQQIGVLAIAFSQDVKTKTIVRSCLASLESLDACIVPALQSSALHHADILEHHFNDEMLIFRNLIHDIIDSRSLVNNYLDMLAESLHIHIAGKSVPREYLLIVQMGSVLAEHFRLPVNYSALSDDGKRVHKDLILILRECLAAVSLATPVDPKRIVKRLKILYSVLAKLRDVIDKNVHDSVFNLSSRRQITNATRTLLRSCKSKSKRQRSYVKQSQDSVVPDPHNYTSSIANSISNDGDLISFQLTEILRIN.

Its subcellular location is the cytoplasm. It is found in the cell membrane. In terms of biological role, required for the cellularization of the syncytial blastoderm embryo. Involved in the localization of the actin filaments just prior to and during plasma membrane invagination. Sry-alpha together with nullo and bnk may provide auxiliary functions, by acting both to stabilize a large and dynamic microfilament structure and regulate its functions. The polypeptide is Serendipity locus protein alpha (Sry-alpha) (Drosophila pseudoobscura pseudoobscura (Fruit fly)).